The chain runs to 236 residues: Peptidase E (236 aa).

Active-site charge relay system residues include Ser122, Asp137, and His159.

This sequence belongs to the peptidase S51 family.

It is found in the cytoplasm. It catalyses the reaction Dipeptidase E catalyzes the hydrolysis of dipeptides Asp-|-Xaa. It does not act on peptides with N-terminal Glu, Asn or Gln, nor does it cleave isoaspartyl peptides.. Functionally, hydrolyzes dipeptides containing N-terminal aspartate residues. May play a role in allowing the cell to use peptide aspartate to spare carbon otherwise required for the synthesis of the aspartate family of amino acids. This chain is Peptidase E, found in Shewanella sp. (strain W3-18-1).